The primary structure comprises 410 residues: Eukaryotic initiation factor 4A (410 aa).

Residues 37–65 (ESFDSMGLQENLLRGIYAYGFEKPSAIQQ) carry the Q motif motif. A Helicase ATP-binding domain is found at 68–238 (IVPFCKGLDV…RKFMNKPVRI (171 aa)). 81 to 88 (AQSGTGKT) is a binding site for ATP. Residues 186-189 (DEAD) carry the DEAD box motif. In terms of domain architecture, Helicase C-terminal spans 249-410 (GIKQFYVNID…ELPANVADLL (162 aa)).

Belongs to the DEAD box helicase family. eIF4A subfamily. EIF4F is a multi-subunit complex, the composition of which varies with external and internal environmental conditions. It is composed of at least EIF4A, EIF4E and EIF4G.

The catalysed reaction is ATP + H2O = ADP + phosphate + H(+). Functionally, ATP-dependent RNA helicase which is a subunit of the eIF4F complex involved in cap recognition and is required for mRNA binding to ribosome. In the current model of translation initiation, eIF4A unwinds RNA secondary structures in the 5'-UTR of mRNAs which is necessary to allow efficient binding of the small ribosomal subunit, and subsequent scanning for the initiator codon. This Zea mays (Maize) protein is Eukaryotic initiation factor 4A.